The primary structure comprises 136 residues: Large ribosomal subunit protein bL17 (136 aa).

The protein belongs to the bacterial ribosomal protein bL17 family. As to quaternary structure, part of the 50S ribosomal subunit. Contacts protein L32.

This chain is Large ribosomal subunit protein bL17, found in Rickettsia prowazekii (strain Madrid E).